A 98-amino-acid polypeptide reads, in one-letter code: NADH-ubiquinone oxidoreductase chain 4L (98 aa).

The next 3 helical transmembrane spans lie at 1 to 21 (MSLV…GLLM), 29 to 49 (SLLC…LTIL), and 61 to 81 (IILL…LVMV).

This sequence belongs to the complex I subunit 4L family. Core subunit of respiratory chain NADH dehydrogenase (Complex I) which is composed of 45 different subunits.

It is found in the mitochondrion inner membrane. It catalyses the reaction a ubiquinone + NADH + 5 H(+)(in) = a ubiquinol + NAD(+) + 4 H(+)(out). Functionally, core subunit of the mitochondrial membrane respiratory chain NADH dehydrogenase (Complex I) which catalyzes electron transfer from NADH through the respiratory chain, using ubiquinone as an electron acceptor. Part of the enzyme membrane arm which is embedded in the lipid bilayer and involved in proton translocation. The sequence is that of NADH-ubiquinone oxidoreductase chain 4L (MT-ND4L) from Elaphodus cephalophus (Tufted deer).